The primary structure comprises 363 residues: Peroxisomal (S)-2-hydroxyacid oxidase GLO4 (363 aa).

The FMN hydroxy acid dehydrogenase domain maps to 1–357 (MDQIVNVDEF…TRNHVRTENE (357 aa)). Residues 78-80 (PTA), serine 107, 128-130 (QIY), and threonine 156 each bind FMN. An a 2-oxocarboxylate-binding site is contributed by tyrosine 130. Residue arginine 165 coordinates a 2-oxocarboxylate. 2 residues coordinate FMN: lysine 228 and serine 250. Histidine 252 acts as the Proton acceptor in catalysis. Arginine 255 contributes to the a 2-oxocarboxylate binding site. Residues 283–287 (DGGVR) and 306–307 (GR) contribute to the FMN site. The short motif at 361–363 (SML) is the Microbody targeting signal element.

Belongs to the FMN-dependent alpha-hydroxy acid dehydrogenase family. Homotetramer. FMN serves as cofactor.

It localises to the peroxisome. It carries out the reaction a (2S)-2-hydroxycarboxylate + O2 = a 2-oxocarboxylate + H2O2. The enzyme catalyses 2-hydroxydodecanoate + O2 = 2-oxododecanoate + H2O2. It catalyses the reaction 2-hydroxyhexanoate + O2 = 2-oxohexanoate + H2O2. The catalysed reaction is 2-hydroxyoctanoate + O2 = 2-oxooctanoate + H2O2. It carries out the reaction (S)-lactate + O2 = pyruvate + H2O2. It functions in the pathway lipid metabolism; fatty acid metabolism. In terms of biological role, oxidase that catalyzes the oxidation of a broad range of 2-hydroxyacids to the corresponding 2-oxoacids, with a reduction of O2 to H2O2. Displays the highest activity with the long-chain fatty acid 2-hydroxydodecanoate and has intermediate activity with 2-hydroxyhexanoate, 2-hydroxyoctanote, and the short-chain hydroxyacid (S)-lactate (L-lactate). With much lower activity, it can also use glycolate, leucic acid, valic acid, and isoleucic acid as substrates in vitro. Cannot use 2-hydroxyhexadecanoate or D-lactate as substrates. May be involved in a general medium- and long-chain fatty acid catabolic pathway such as alpha-oxidation. The sequence is that of Peroxisomal (S)-2-hydroxyacid oxidase GLO4 (GLO4) from Arabidopsis thaliana (Mouse-ear cress).